Consider the following 101-residue polypeptide: Apolipoprotein C-II (101 aa).

A signal peptide spans 1–22; the sequence is MGTRYFLVGFLILLVLGFEVQG. Residues 66-74 form a lipid binding region; it reads AVDEKIRDI. Residues 78 to 101 form a lipoprotein lipase cofactor region; that stretch reads STAAVTTYAGIITDQVFSVLSGKD.

Belongs to the apolipoprotein C2 family. Post-translationally, proapolipoprotein C-II is synthesized as a sialic acid containing glycoprotein which is subsequently desialylated prior to its proteolytic processing. Proapolipoprotein C-II undergoes proteolytic cleavage of its N-terminal hexapeptide to generate apolipoprotein C-II. In bovine, proapolipoprotein C-II was found to be the minor form whereas apolipoprotein C-II was found to be the major form in plasma.

It is found in the secreted. Functionally, component of chylomicrons, very low-density lipoproteins (VLDL), low-density lipoproteins (LDL), and high-density lipoproteins (HDL) in plasma. Plays an important role in lipoprotein metabolism as an activator of lipoprotein lipase. Both proapolipoprotein C-II and apolipoprotein C-II can activate lipoprotein lipase. The chain is Apolipoprotein C-II (APOC2) from Bos taurus (Bovine).